A 433-amino-acid chain; its full sequence is ATP-dependent protease ATPase subunit HslU (433 aa).

ATP contacts are provided by residues V18, 60-65 (GVGKTE), D246, E311, and R383.

This sequence belongs to the ClpX chaperone family. HslU subfamily. As to quaternary structure, a double ring-shaped homohexamer of HslV is capped on each side by a ring-shaped HslU homohexamer. The assembly of the HslU/HslV complex is dependent on binding of ATP.

The protein resides in the cytoplasm. ATPase subunit of a proteasome-like degradation complex; this subunit has chaperone activity. The binding of ATP and its subsequent hydrolysis by HslU are essential for unfolding of protein substrates subsequently hydrolyzed by HslV. HslU recognizes the N-terminal part of its protein substrates and unfolds these before they are guided to HslV for hydrolysis. The chain is ATP-dependent protease ATPase subunit HslU from Nitrobacter winogradskyi (strain ATCC 25391 / DSM 10237 / CIP 104748 / NCIMB 11846 / Nb-255).